We begin with the raw amino-acid sequence, 546 residues long: Chaperonin GroEL (546 aa).

Residues 29 to 32 (TLGP), Lys-50, 86 to 90 (DGTTT), Gly-415, and Asp-495 each bind ATP. Residues 526–546 (EDNAGGGGMPQGMGGGMPGMM) are disordered. Over residues 529–546 (AGGGGMPQGMGGGMPGMM) the composition is skewed to gly residues.

The protein belongs to the chaperonin (HSP60) family. In terms of assembly, forms a cylinder of 14 subunits composed of two heptameric rings stacked back-to-back. Interacts with the co-chaperonin GroES.

It localises to the cytoplasm. The catalysed reaction is ATP + H2O + a folded polypeptide = ADP + phosphate + an unfolded polypeptide.. Together with its co-chaperonin GroES, plays an essential role in assisting protein folding. The GroEL-GroES system forms a nano-cage that allows encapsulation of the non-native substrate proteins and provides a physical environment optimized to promote and accelerate protein folding. This is Chaperonin GroEL from Christiangramia forsetii (strain DSM 17595 / CGMCC 1.15422 / KT0803) (Gramella forsetii).